The sequence spans 585 residues: Arginine--tRNA ligase (585 aa).

Residues 127–137 carry the 'HIGH' region motif; it reads PNTNKPLHVGH.

The protein belongs to the class-I aminoacyl-tRNA synthetase family. In terms of assembly, monomer.

It is found in the cytoplasm. The catalysed reaction is tRNA(Arg) + L-arginine + ATP = L-arginyl-tRNA(Arg) + AMP + diphosphate. This Borreliella burgdorferi (strain ATCC 35210 / DSM 4680 / CIP 102532 / B31) (Borrelia burgdorferi) protein is Arginine--tRNA ligase (argS).